The chain runs to 384 residues: uncharacterized protein (384 aa).

Residues 1–116 (MTEMPKKKFS…FPAAPPPMDS (116 aa)) form a disordered region. Basic and acidic residues-rich tracts occupy residues 14 to 70 (ARGD…RAGD) and 78 to 95 (RFKDKDRDKPRYGDDRPR). S-adenosyl-L-methionine contacts are provided by Gly318, Ile338, and Leu347.

Belongs to the class IV-like SAM-binding methyltransferase superfamily. RNA methyltransferase TrmH family.

This is an uncharacterized protein from Synechocystis sp. (strain ATCC 27184 / PCC 6803 / Kazusa).